The primary structure comprises 149 residues: Large ribosomal subunit protein uL11 (149 aa).

This sequence belongs to the universal ribosomal protein uL11 family. Part of the ribosomal stalk of the 50S ribosomal subunit. Interacts with L10 and the large rRNA to form the base of the stalk. L10 forms an elongated spine to which L12 dimers bind in a sequential fashion forming a multimeric L10(L12)X complex. In terms of processing, one or more lysine residues are methylated.

Its function is as follows. Forms part of the ribosomal stalk which helps the ribosome interact with GTP-bound translation factors. The protein is Large ribosomal subunit protein uL11 of Methylobacterium nodulans (strain LMG 21967 / CNCM I-2342 / ORS 2060).